The sequence spans 365 residues: MTTYTNGNYTQPKTLDKDEQLAGLAVTLANAAAFPMILKSAFELKILDIFSKAGEGVFVSTSEIASQIGAKNPNAPVLLDRMLRLLASHSVLTCKLQKGEGGSQRVYGPAPLCNYLASNDGQGSLGPLLVLHHDKVMMESWFHLNDYILEGGVPFKRAHGMIQFDYTGTDERFNHVFNQGMAHHTILVMKKLLDNYNGFNDVKVLVDVGGNIGVNVSMIVAKHTHIKGINYDLPHVIADAPSYPGVEHVGGNMFESIPQADAIFMKWVLHDWSDEHCVKILNKCYESLAKGGKIILVESLIPVIPEDNLESHMVFSLDCHTLVHNQGGKERSKEDFEALASKTGFSTVDVICCAYDTWVMELYKK.

Asp232 provides a ligand contact to S-adenosyl-L-methionine. His270 functions as the Proton acceptor in the catalytic mechanism.

This sequence belongs to the class I-like SAM-binding methyltransferase superfamily. Cation-independent O-methyltransferase family. As to expression, leaves and roots. The levels found in the leaves are 25 times greater than in the roots.

The enzyme catalyses myo-inositol + S-adenosyl-L-methionine = 1D-4-O-methyl-myo-inositol + S-adenosyl-L-homocysteine + H(+). It functions in the pathway polyol metabolism; myo-inositol metabolism. Catalyzes the methylation of myo-inositol into ononitol (1D-4-O-methyl myo-inositol), the first step in the biosynthesis of the cyclic sugar pinitol which has osmoprotective properties. This chain is Inositol 4-methyltransferase (IMT1), found in Mesembryanthemum crystallinum (Common ice plant).